A 105-amino-acid polypeptide reads, in one-letter code: Dynein axonemal light chain 4 (105 aa).

This sequence belongs to the dynein light chain family. In terms of assembly, consists of at least two heavy chains and a number of intermediate and light chains.

The protein localises to the cytoplasm. It is found in the cytoskeleton. The protein resides in the cilium axoneme. Functionally, force generating protein of respiratory cilia. Produces force towards the minus ends of microtubules. Dynein has ATPase activity. The chain is Dynein axonemal light chain 4 (Dnal4) from Mus musculus (Mouse).